The chain runs to 332 residues: Cysteine and histidine-rich domain-containing protein 1 (332 aa).

A2 bears the N-acetylalanine mark. Positions 2 to 77 (ALLCYNRGCG…KPPEPVKPEV (76 aa)) are interaction with PPP5C. C5, C10, C24, H27, C42, and C43 together coordinate Zn(2+). 2 CHORD domains span residues 5–64 (CYNR…KGRH) and 157–216 (CKNG…KGKH). T47 is subject to Phosphothreonine. S51 bears the Phosphoserine mark. C59, H64, C157, C162, C176, H179, C194, C195, C211, and H216 together coordinate Zn(2+). The tract at residues 65–316 (NSEKPPEPVK…AEPMQWASLE (252 aa)) is interaction with HSP90AA1 and HSP90AB1. The CS domain occupies 227 to 316 (VVPCRHDWHQ…AEPMQWASLE (90 aa)).

As to quaternary structure, interacts with HSP90AA1, ROCK1 and ROCK2. Interacts with HSP90AB1 and PPP5C. In terms of tissue distribution, underexpressed in many breast and lung cancers.

Its function is as follows. Regulates centrosome duplication, probably by inhibiting the kinase activity of ROCK2. Proposed to act as co-chaperone for HSP90. May play a role in the regulation of NOD1 via a HSP90 chaperone complex. In vitro, has intrinsic chaperone activity. This function may be achieved by inhibiting association of ROCK2 with NPM1. Plays a role in ensuring the localization of the tyrosine kinase receptor EGFR to the plasma membrane, and thus ensures the subsequent regulation of EGFR activity and EGF-induced actin cytoskeleton remodeling. Involved in stress response. Prevents tumorigenesis. This chain is Cysteine and histidine-rich domain-containing protein 1 (CHORDC1), found in Homo sapiens (Human).